The following is a 376-amino-acid chain: 1-acyl-sn-glycerol-3-phosphate acyltransferase 3 (376 aa).

2 helical membrane passes run 14 to 34 and 49 to 69; these read VLFL…FIIV and VAEL…CIKI. Residues 92 to 97 carry the HXXXXD motif motif; the sequence is HRSDID. A run of 3 helical transmembrane segments spans residues 98–118, 306–326, and 335–355; these read WLIG…LAIM, LIVV…LLQW, and IILL…ILIQ.

This sequence belongs to the 1-acyl-sn-glycerol-3-phosphate acyltransferase family. Predominantly expressed in pollen.

The protein resides in the membrane. The enzyme catalyses a 1-acyl-sn-glycero-3-phosphate + an acyl-CoA = a 1,2-diacyl-sn-glycero-3-phosphate + CoA. The protein operates within phospholipid metabolism; CDP-diacylglycerol biosynthesis; CDP-diacylglycerol from sn-glycerol 3-phosphate: step 2/3. Functionally, converts lysophosphatidic acid (LPA) into phosphatidic acid by incorporating acyl moiety at the 2 position. Has preference for C-18-CoA substrates compared to C-16-CoA substrates. This Arabidopsis thaliana (Mouse-ear cress) protein is 1-acyl-sn-glycerol-3-phosphate acyltransferase 3 (LPAT3).